Consider the following 341-residue polypeptide: MTTQQPVAVLGGGSFGTAIANLLAENGHQVLQWMRDPEQAQAIRVNRENPRYLKGIKVRPEVEPVTDITATLEACELIFVALPSSALRAVLSPHVERLNGKMLVSLTKGIEAQSFKLMSQILEEIVPQARIGVLSGPNLAREIAEHALTATVVASEDEALCQQVQAALHGRTFRVYASNDRFGVELGGALKNVYAIIAGMAVALDMGENTKSMLITRALAEMTRFAVSQGANPMTFLGLAGVGDLIVTCSSPKSRNYQVGFALGQGLTLEAAVTRLGEVAEGVNTLKVLKVKAQEVQVYMPLVAGLHAILFEGRTLSQVIEALMRAEPKTDVDFISITGFN.

NADPH contacts are provided by Ser-14, Phe-15, Arg-35, and Lys-108. Positions 108 and 136 each coordinate sn-glycerol 3-phosphate. Ala-140 is a binding site for NADPH. Sn-glycerol 3-phosphate contacts are provided by Lys-191, Asp-244, Ser-254, Arg-255, and Asn-256. Lys-191 (proton acceptor) is an active-site residue. Arg-255 is an NADPH binding site. NADPH contacts are provided by Val-279 and Glu-281.

The protein belongs to the NAD-dependent glycerol-3-phosphate dehydrogenase family.

It is found in the cytoplasm. It catalyses the reaction sn-glycerol 3-phosphate + NAD(+) = dihydroxyacetone phosphate + NADH + H(+). It carries out the reaction sn-glycerol 3-phosphate + NADP(+) = dihydroxyacetone phosphate + NADPH + H(+). Its pathway is membrane lipid metabolism; glycerophospholipid metabolism. In terms of biological role, catalyzes the reduction of the glycolytic intermediate dihydroxyacetone phosphate (DHAP) to sn-glycerol 3-phosphate (G3P), the key precursor for phospholipid synthesis. This chain is Glycerol-3-phosphate dehydrogenase [NAD(P)+], found in Pseudomonas savastanoi pv. phaseolicola (strain 1448A / Race 6) (Pseudomonas syringae pv. phaseolicola (strain 1448A / Race 6)).